We begin with the raw amino-acid sequence, 280 residues long: Pantothenate synthetase (280 aa).

30-37 (MGYLHEGH) is an ATP binding site. H37 serves as the catalytic Proton donor. (R)-pantoate is bound at residue Q61. Residue Q61 coordinates beta-alanine. Position 147-150 (147-150 (GKKD)) interacts with ATP. Residue Q153 coordinates (R)-pantoate. ATP-binding positions include V176 and 184–187 (MSSR).

It belongs to the pantothenate synthetase family. Homodimer.

It localises to the cytoplasm. The catalysed reaction is (R)-pantoate + beta-alanine + ATP = (R)-pantothenate + AMP + diphosphate + H(+). It functions in the pathway cofactor biosynthesis; (R)-pantothenate biosynthesis; (R)-pantothenate from (R)-pantoate and beta-alanine: step 1/1. Catalyzes the condensation of pantoate with beta-alanine in an ATP-dependent reaction via a pantoyl-adenylate intermediate. The sequence is that of Pantothenate synthetase from Sulfurihydrogenibium sp. (strain YO3AOP1).